The following is an 86-amino-acid chain: Large ribosomal subunit protein bL31B (86 aa).

It belongs to the bacterial ribosomal protein bL31 family. Type B subfamily. In terms of assembly, part of the 50S ribosomal subunit.

This chain is Large ribosomal subunit protein bL31B, found in Burkholderia lata (strain ATCC 17760 / DSM 23089 / LMG 22485 / NCIMB 9086 / R18194 / 383).